A 224-amino-acid chain; its full sequence is ATP phosphoribosyltransferase (224 aa).

The protein belongs to the ATP phosphoribosyltransferase family. Short subfamily. Heteromultimer composed of HisG and HisZ subunits.

It is found in the cytoplasm. It catalyses the reaction 1-(5-phospho-beta-D-ribosyl)-ATP + diphosphate = 5-phospho-alpha-D-ribose 1-diphosphate + ATP. The protein operates within amino-acid biosynthesis; L-histidine biosynthesis; L-histidine from 5-phospho-alpha-D-ribose 1-diphosphate: step 1/9. Its function is as follows. Catalyzes the condensation of ATP and 5-phosphoribose 1-diphosphate to form N'-(5'-phosphoribosyl)-ATP (PR-ATP). Has a crucial role in the pathway because the rate of histidine biosynthesis seems to be controlled primarily by regulation of HisG enzymatic activity. The chain is ATP phosphoribosyltransferase from Cupriavidus necator (strain ATCC 17699 / DSM 428 / KCTC 22496 / NCIMB 10442 / H16 / Stanier 337) (Ralstonia eutropha).